Reading from the N-terminus, the 241-residue chain is Carboxy-S-adenosyl-L-methionine synthase (241 aa).

Residues tyrosine 38, 63 to 65 (GCS), 88 to 89 (DN), 116 to 117 (DI), asparagine 131, and arginine 198 each bind S-adenosyl-L-methionine.

It belongs to the class I-like SAM-binding methyltransferase superfamily. Cx-SAM synthase family. Homodimer.

The enzyme catalyses prephenate + S-adenosyl-L-methionine = carboxy-S-adenosyl-L-methionine + 3-phenylpyruvate + H2O. Functionally, catalyzes the conversion of S-adenosyl-L-methionine (SAM) to carboxy-S-adenosyl-L-methionine (Cx-SAM). This chain is Carboxy-S-adenosyl-L-methionine synthase, found in Histophilus somni (strain 2336) (Haemophilus somnus).